The following is a 101-amino-acid chain: Large ribosomal subunit protein uL6m (101 aa).

It belongs to the universal ribosomal protein uL6 family.

The protein resides in the mitochondrion. The polypeptide is Large ribosomal subunit protein uL6m (RPL6) (Marchantia polymorpha (Common liverwort)).